Reading from the N-terminus, the 186-residue chain is Putative 3-methyladenine DNA glycosylase (186 aa).

Belongs to the DNA glycosylase MPG family.

This is Putative 3-methyladenine DNA glycosylase from Borrelia garinii subsp. bavariensis (strain ATCC BAA-2496 / DSM 23469 / PBi) (Borreliella bavariensis).